Here is a 648-residue protein sequence, read N- to C-terminus: Macrolide export ATP-binding/permease protein MacB (648 aa).

Positions leucine 5 to threonine 243 constitute an ABC transporter domain. An ATP-binding site is contributed by glycine 41 to serine 48. Transmembrane regions (helical) follow at residues leucine 273–glycine 293, leucine 523–isoleucine 543, alanine 576–phenylalanine 596, and proline 611–leucine 631.

The protein belongs to the ABC transporter superfamily. Macrolide exporter (TC 3.A.1.122) family. In terms of assembly, homodimer. Part of the tripartite efflux system MacAB-TolC, which is composed of an inner membrane transporter, MacB, a periplasmic membrane fusion protein, MacA, and an outer membrane component, TolC. The complex forms a large protein conduit and can translocate molecules across both the inner and outer membranes. Interacts with MacA.

Its subcellular location is the cell inner membrane. Its function is as follows. Part of the tripartite efflux system MacAB-TolC. MacB is a non-canonical ABC transporter that contains transmembrane domains (TMD), which form a pore in the inner membrane, and an ATP-binding domain (NBD), which is responsible for energy generation. Confers resistance against macrolides. The chain is Macrolide export ATP-binding/permease protein MacB from Escherichia coli O6:K15:H31 (strain 536 / UPEC).